An 82-amino-acid polypeptide reads, in one-letter code: Delta-conotoxin-like SmVIA (82 aa).

The N-terminal stretch at 1–22 (MKLTCVMIVAVLFLIAWTFVTA) is a signal peptide. Positions 23 to 49 (DDSRNGLKNLFPKARHEMKNPEASKLN) are excised as a propeptide. 3 disulfides stabilise this stretch: Cys-54–Cys-69, Cys-61–Cys-73, and Cys-68–Cys-77. The residue at position 65 (Pro-65) is a 4-hydroxyproline.

This sequence belongs to the conotoxin O1 superfamily. Expressed by the venom duct.

The protein resides in the secreted. Functionally, delta-conotoxins bind to site 6 of voltage-gated sodium channels (Nav) and inhibit the inactivation process. This is Delta-conotoxin-like SmVIA from Conus stercusmuscarum (Fly-specked cone).